Here is a 146-residue protein sequence, read N- to C-terminus: Ribonuclease H (146 aa).

The 143-residue stretch at 1 to 143 folds into the RNase H type-1 domain; sequence MQKKIIVYTD…CDELARQAIK (143 aa). Asp-10, Glu-48, Asp-70, and Asp-135 together coordinate Mg(2+).

This sequence belongs to the RNase H family. As to quaternary structure, monomer. The cofactor is Mg(2+).

Its subcellular location is the cytoplasm. It catalyses the reaction Endonucleolytic cleavage to 5'-phosphomonoester.. In terms of biological role, endonuclease that specifically degrades the RNA of RNA-DNA hybrids. This is Ribonuclease H from Chlorobium phaeobacteroides (strain DSM 266 / SMG 266 / 2430).